The chain runs to 303 residues: Porphobilinogen deaminase (303 aa).

C240 is modified (S-(dipyrrolylmethanemethyl)cysteine).

This sequence belongs to the HMBS family. As to quaternary structure, monomer. Dipyrromethane serves as cofactor.

The enzyme catalyses 4 porphobilinogen + H2O = hydroxymethylbilane + 4 NH4(+). The protein operates within porphyrin-containing compound metabolism; protoporphyrin-IX biosynthesis; coproporphyrinogen-III from 5-aminolevulinate: step 2/4. In terms of biological role, tetrapolymerization of the monopyrrole PBG into the hydroxymethylbilane pre-uroporphyrinogen in several discrete steps. The chain is Porphobilinogen deaminase from Stenotrophomonas maltophilia (strain K279a).